Here is a 177-residue protein sequence, read N- to C-terminus: Large ribosomal subunit protein uL6 (177 aa).

It belongs to the universal ribosomal protein uL6 family. Part of the 50S ribosomal subunit.

Its function is as follows. This protein binds to the 23S rRNA, and is important in its secondary structure. It is located near the subunit interface in the base of the L7/L12 stalk, and near the tRNA binding site of the peptidyltransferase center. This Acinetobacter baylyi (strain ATCC 33305 / BD413 / ADP1) protein is Large ribosomal subunit protein uL6.